Consider the following 428-residue polypeptide: Histone deacetylase 3 (428 aa).

The histone deacetylase stretch occupies residues 3–316; it reads KTVAYFYDPD…WTYETSLLVD (314 aa). Positions 17, 21, and 25 each coordinate 1D-myo-inositol 1,4,5,6-tetrakisphosphate. His-135 is an active-site residue. Zn(2+) contacts are provided by Asp-170, His-172, and Asp-259. Arg-265 lines the 1D-myo-inositol 1,4,5,6-tetrakisphosphate pocket. Residues 385-428 are disordered; it reads LSYDRTDEPDPEERGSEENYSRPEAANEFYDGDHDNDKESDVEI. 2 stretches are compositionally biased toward basic and acidic residues: residues 386-405 and 415-428; these read SYDR…ENYS and DGDH…DVEI.

This sequence belongs to the histone deacetylase family. HD type 1 subfamily.

Its subcellular location is the nucleus. The protein resides in the chromosome. It localises to the cytoplasm. The protein localises to the cytosol. It catalyses the reaction N(6)-acetyl-L-lysyl-[histone] + H2O = L-lysyl-[histone] + acetate. The catalysed reaction is N(6)-acetyl-L-lysyl-[protein] + H2O = L-lysyl-[protein] + acetate. It carries out the reaction N(6)-(2E)-butenoyl-L-lysyl-[protein] + H2O = (2E)-2-butenoate + L-lysyl-[protein]. The enzyme catalyses N(6)-(2-hydroxyisobutanoyl)-L-lysyl-[protein] + H2O = 2-hydroxy-2-methylpropanoate + L-lysyl-[protein]. It catalyses the reaction N(6)-[(S)-lactoyl]-L-lysyl-[protein] + H2O = (S)-lactate + L-lysyl-[protein]. With respect to regulation, inositol tetraphosphate (1D-myo-inositol 1,4,5,6-tetrakisphosphate) promotes the histone deacetylase activity by acting as an intermolecular glue between HDAC3 and N-Cor repressor complex components. Functionally, histone deacetylase that catalyzes the deacetylation of lysine residues on the N-terminal part of the core histones (H2A, H2B, H3 and H4), and some other non-histone substrates. Histone deacetylation gives a tag for epigenetic repression and plays an important role in transcriptional regulation, cell cycle progression and developmental events. Histone deacetylases act via the formation of large multiprotein complexes, such as N-Cor repressor complex, which activate the histone deacetylase activity. Participates in the BCL6 transcriptional repressor activity by deacetylating the H3 'Lys-27' (H3K27) on enhancer elements, antagonizing EP300 acetyltransferase activity and repressing proximal gene expression. Also functions as a deacetylase for non-histone targets. In addition to protein deacetylase activity, also acts as a protein-lysine deacylase by recognizing other acyl groups: catalyzes removal of (2E)-butenoyl (crotonyl), lactoyl (lactyl) and 2-hydroxyisobutanoyl (2-hydroxyisobutyryl) acyl groups from lysine residues, leading to protein decrotonylation, delactylation and de-2-hydroxyisobutyrylation, respectively. This chain is Histone deacetylase 3 (HDAC3), found in Gallus gallus (Chicken).